The primary structure comprises 204 residues: Guanylate kinase (204 aa).

The Guanylate kinase-like domain maps to 4–182; the sequence is GLLYVISAPS…ALNQLRAIVQ (179 aa). Residue 11-18 coordinates ATP; it reads APSGAGKT.

The protein belongs to the guanylate kinase family.

Its subcellular location is the cytoplasm. It carries out the reaction GMP + ATP = GDP + ADP. Functionally, essential for recycling GMP and indirectly, cGMP. This Methylococcus capsulatus (strain ATCC 33009 / NCIMB 11132 / Bath) protein is Guanylate kinase.